The following is a 463-amino-acid chain: Glycine--tRNA ligase (463 aa).

The substrate site is built by R100 and E175. Residues 207–209 (RNE), 217–222 (FRTREF), 291–292 (EL), and 335–338 (GADR) each bind ATP. 222–226 (FEQME) lines the substrate pocket. 331–335 (EPSLG) contacts substrate.

Belongs to the class-II aminoacyl-tRNA synthetase family. In terms of assembly, homodimer.

The protein resides in the cytoplasm. It carries out the reaction tRNA(Gly) + glycine + ATP = glycyl-tRNA(Gly) + AMP + diphosphate. Functionally, catalyzes the attachment of glycine to tRNA(Gly). The protein is Glycine--tRNA ligase of Clostridium tetani (strain Massachusetts / E88).